Reading from the N-terminus, the 204-residue chain is Large ribosomal subunit protein uL4 (204 aa).

The disordered stretch occupies residues 53-77 (ISDVSGTTAKPYSQKRTGRARQGSL). The segment covering 56-67 (VSGTTAKPYSQK) has biased composition (polar residues).

This sequence belongs to the universal ribosomal protein uL4 family. As to quaternary structure, part of the 50S ribosomal subunit.

One of the primary rRNA binding proteins, this protein initially binds near the 5'-end of the 23S rRNA. It is important during the early stages of 50S assembly. It makes multiple contacts with different domains of the 23S rRNA in the assembled 50S subunit and ribosome. Its function is as follows. Forms part of the polypeptide exit tunnel. The chain is Large ribosomal subunit protein uL4 from Wolbachia sp. subsp. Brugia malayi (strain TRS).